A 449-amino-acid chain; its full sequence is Maltoporin (449 aa).

The signal sequence occupies residues 1 to 24 (MITLRKLPLAVAVAAGVMSAQAMA).

It belongs to the porin LamB (TC 1.B.3) family. Homotrimer formed of three 18-stranded antiparallel beta-barrels, containing three independent channels.

The protein localises to the cell outer membrane. The catalysed reaction is beta-maltose(in) = beta-maltose(out). Functionally, involved in the transport of maltose and maltodextrins. This chain is Maltoporin, found in Citrobacter koseri (strain ATCC BAA-895 / CDC 4225-83 / SGSC4696).